Reading from the N-terminus, the 295-residue chain is Small ribosomal subunit protein mS23 (295 aa).

Residues 249–295 form a disordered region; that stretch reads IGSVVEEEKSQSSLFEDLLSNDNLQSEPEVEQSGQQQQQEQPKQETN. A compositionally biased stretch (low complexity) spans 273–289; that stretch reads QSEPEVEQSGQQQQQEQ.

It belongs to the mitochondrion-specific ribosomal protein mS23 family. Component of the mitochondrial small ribosomal subunit (mt-SSU).

It is found in the mitochondrion. Functionally, component of the mitochondrial ribosome (mitoribosome), a dedicated translation machinery responsible for the synthesis of mitochondrial genome-encoded proteins, including at least some of the essential transmembrane subunits of the mitochondrial respiratory chain. The mitoribosomes are attached to the mitochondrial inner membrane and translation products are cotranslationally integrated into the membrane. In Candida albicans (strain SC5314 / ATCC MYA-2876) (Yeast), this protein is Small ribosomal subunit protein mS23 (RSM25).